Here is a 213-residue protein sequence, read N- to C-terminus: MTTNKSYLTYFTDALWINNQPLIAILGICSALAVTTTVTTALTMGFAVSFVTGCSSFVVSLLRKITPESVRMIAQLIIISLFVILIDQFLKAFFFTISKTLSVFVGLIITNCIVMGRAESMARHVSPIPAFLDGLGSGLGYGWVLVCISIIRELFGFGTILGFRVIPEILYASAAHPDGYENLGLMVLAPSAFFLLGIMIWIVNIIRAPKTKR.

6 consecutive transmembrane segments (helical) span residues 22–42 (LIAI…TTAL), 43–63 (TMGF…SLLR), 77–97 (IIIS…FFTI), 101–121 (LSVF…AESM), 131–151 (FLDG…ISII), and 183–203 (LGLM…IWIV).

It belongs to the NqrDE/RnfAE family. Composed of six subunits; NqrA, NqrB, NqrC, NqrD, NqrE and NqrF.

Its subcellular location is the cell inner membrane. It catalyses the reaction a ubiquinone + n Na(+)(in) + NADH + H(+) = a ubiquinol + n Na(+)(out) + NAD(+). In terms of biological role, NQR complex catalyzes the reduction of ubiquinone-1 to ubiquinol by two successive reactions, coupled with the transport of Na(+) ions from the cytoplasm to the periplasm. NqrA to NqrE are probably involved in the second step, the conversion of ubisemiquinone to ubiquinol. The polypeptide is Na(+)-translocating NADH-quinone reductase subunit D (Chlamydia trachomatis serovar L2 (strain ATCC VR-902B / DSM 19102 / 434/Bu)).